Here is a 392-residue protein sequence, read N- to C-terminus: Glutamyl-tRNA reductase (392 aa).

Residues 38 to 41, S86, 91 to 93, and Q97 each bind substrate; these read TCNR and EDQ. C39 acts as the Nucleophile in catalysis. NADP(+) is bound at residue 165–170; the sequence is GAGEMA.

Belongs to the glutamyl-tRNA reductase family. As to quaternary structure, homodimer.

The catalysed reaction is (S)-4-amino-5-oxopentanoate + tRNA(Glu) + NADP(+) = L-glutamyl-tRNA(Glu) + NADPH + H(+). It participates in porphyrin-containing compound metabolism; protoporphyrin-IX biosynthesis; 5-aminolevulinate from L-glutamyl-tRNA(Glu): step 1/2. Catalyzes the NADPH-dependent reduction of glutamyl-tRNA(Glu) to glutamate 1-semialdehyde (GSA). In Methanocaldococcus jannaschii (strain ATCC 43067 / DSM 2661 / JAL-1 / JCM 10045 / NBRC 100440) (Methanococcus jannaschii), this protein is Glutamyl-tRNA reductase.